The primary structure comprises 222 residues: Probable transaldolase (222 aa).

Lys-91 functions as the Schiff-base intermediate with substrate in the catalytic mechanism.

It belongs to the transaldolase family. Type 3B subfamily.

Its subcellular location is the cytoplasm. It carries out the reaction D-sedoheptulose 7-phosphate + D-glyceraldehyde 3-phosphate = D-erythrose 4-phosphate + beta-D-fructose 6-phosphate. Its pathway is carbohydrate degradation; pentose phosphate pathway; D-glyceraldehyde 3-phosphate and beta-D-fructose 6-phosphate from D-ribose 5-phosphate and D-xylulose 5-phosphate (non-oxidative stage): step 2/3. Transaldolase is important for the balance of metabolites in the pentose-phosphate pathway. The protein is Probable transaldolase of Chlorobaculum tepidum (strain ATCC 49652 / DSM 12025 / NBRC 103806 / TLS) (Chlorobium tepidum).